Here is a 331-residue protein sequence, read N- to C-terminus: Tyrosine recombinase XerD (331 aa).

The 86-residue stretch at Gly-8 to Tyr-93 folds into the Core-binding (CB) domain. The region spanning Ala-114 to Gln-318 is the Tyr recombinase domain. Active-site residues include Arg-161 and Lys-185. Residues Gln-214–Thr-228 are compositionally biased toward basic and acidic residues. The segment at Gln-214–Ser-239 is disordered. Residues His-270, Arg-273, and His-296 contribute to the active site. Tyr-305 serves as the catalytic O-(3'-phospho-DNA)-tyrosine intermediate.

It belongs to the 'phage' integrase family. XerD subfamily. As to quaternary structure, forms a cyclic heterotetrameric complex composed of two molecules of XerC and two molecules of XerD.

Its subcellular location is the cytoplasm. Its function is as follows. Site-specific tyrosine recombinase, which acts by catalyzing the cutting and rejoining of the recombining DNA molecules. The XerC-XerD complex is essential to convert dimers of the bacterial chromosome into monomers to permit their segregation at cell division. It also contributes to the segregational stability of plasmids. The polypeptide is Tyrosine recombinase XerD (Agrobacterium fabrum (strain C58 / ATCC 33970) (Agrobacterium tumefaciens (strain C58))).